We begin with the raw amino-acid sequence, 220 residues long: Mediator of RNA polymerase II transcription subunit 19 (220 aa).

The tract at residues 171–220 (AFDLDGTGKSQSGSNSGNNSKKRKNKSSGSSMATPTHSDSHEDMKRRRLE) is disordered. Low complexity predominate over residues 178–189 (GKSQSGSNSGNN). Residues 208 to 220 (SDSHEDMKRRRLE) show a composition bias toward basic and acidic residues.

Belongs to the Mediator complex subunit 19 family. As to quaternary structure, component of the Mediator complex, which is composed of at least 21 subunits that form three structurally distinct submodules. The Mediator head module contains MED6, MED8, MED11, SRB4/MED17, SRB5/MED18, ROX3/MED19, SRB2/MED20 and SRB6/MED22, the middle module contains MED1, MED4, NUT1/MED5, MED7, CSE2/MED9, NUT2/MED10, SRB7/MED21 and SOH1/MED31, and the tail module contains MED2, PGD1/MED3, RGR1/MED14, GAL11/MED15 and SIN4/MED16. The head and the middle modules interact directly with RNA polymerase II, whereas the elongated tail module interacts with gene-specific regulatory proteins.

It localises to the nucleus. Functionally, component of the Mediator complex, a coactivator involved in the regulated transcription of nearly all RNA polymerase II-dependent genes. Mediator functions as a bridge to convey information from gene-specific regulatory proteins to the basal RNA polymerase II transcription machinery. The Mediator complex, having a compact conformation in its free form, is recruited to promoters by direct interactions with regulatory proteins and serves for the assembly of a functional preinitiation complex with RNA polymerase II and the general transcription factors. The Mediator complex unfolds to an extended conformation and partially surrounds RNA polymerase II, specifically interacting with the unphosphorylated form of the C-terminal domain (CTD) of RNA polymerase II. The Mediator complex dissociates from the RNA polymerase II holoenzyme and stays at the promoter when transcriptional elongation begins. The sequence is that of Mediator of RNA polymerase II transcription subunit 19 (ROX3) from Saccharomyces cerevisiae (strain ATCC 204508 / S288c) (Baker's yeast).